Here is a 403-residue protein sequence, read N- to C-terminus: O-succinylhomoserine sulfhydrylase (403 aa).

N6-(pyridoxal phosphate)lysine is present on Lys219.

This sequence belongs to the trans-sulfuration enzymes family. MetZ subfamily. As to quaternary structure, homotetramer. Requires pyridoxal 5'-phosphate as cofactor.

It carries out the reaction O-succinyl-L-homoserine + hydrogen sulfide = L-homocysteine + succinate. It participates in amino-acid biosynthesis; L-methionine biosynthesis via de novo pathway; L-homocysteine from O-succinyl-L-homoserine: step 1/1. Functionally, catalyzes the formation of L-homocysteine from O-succinyl-L-homoserine (OSHS) and hydrogen sulfide. Cannot use the other activated form of L-homoserine, O-acetyl-L-homoserine, as a substrate. This Pseudomonas aeruginosa (strain ATCC 15692 / DSM 22644 / CIP 104116 / JCM 14847 / LMG 12228 / 1C / PRS 101 / PAO1) protein is O-succinylhomoserine sulfhydrylase.